The primary structure comprises 729 residues: MDNNPPTSTGKCPFTHGSVTASGKSNTDWWPNALNLDILHQHDRKTNPLGDDFSYAAAFKTLDLQAVKNDLKALMTDSQDWWPADWGHYGGLFIRMAWHSAGSYRIADGRGGAGTGNQRFAPLNSWPDNGNLDKARRLLWPIKKKYGNKLSWADLMILAGNMAYESMGLKTFGFGGGREDIWHPEKDVYWGSEKEWLAKSGGEGSRYSGERDLENPLAAVMMGLIYVNPEGVDGNPDPLRTAKDIRETFARMAMNDEETVALTAGGHTVGKAHGNGNAANLGPDPEAADVEEQGLGWVNHKTRGIGRDTVTSGIEGAWTTHPTKWDNGYFDMLLNHDWELTKSPAGAWQWKPVSIKEEDMPVDVEDPSIRCTPLMTDADMAMKMDPEYRKISERFYSDPAYFSEVFARAWFKLTHRDLGPKARYLGADVPAEDLIWQDPVPTVDYTLSDADIADLKAKILASGLSVAELVATAWDSARTFRGSDFRGGANGARIRLAPQKDWEGNEPARLQKVLGVFAGIQSGLSKKVSIADLIVVGGAAAVEKAARDAGVNITVPFAPGRGDATDAQTDAESFAPLEPVHDGFRNWVKKDYAVQPEEMLLDRAQLMGLTAPEMTVLVGGMRVLGANYGGSKNGVFTDKVGVLSNDFFVNLTDMAYQWKPTGKNSYNIVERNTGTVKWSATRVDLVFGSNSILRSYAEVYAQDDNREKFVRDFVKAWVKVMNADRFDLK.

Positions 98–226 (WHSAGSYRIA…LAAVMMGLIY (129 aa)) form a cross-link, tryptophyl-tyrosyl-methioninium (Trp-Tyr) (with M-252). The active-site Proton acceptor is His99. Residues 226 to 252 (YVNPEGVDGNPDPLRTAKDIRETFARM) constitute a cross-link (tryptophyl-tyrosyl-methioninium (Tyr-Met) (with W-98)). His267 is a heme b binding site.

The protein belongs to the peroxidase family. Peroxidase/catalase subfamily. In terms of assembly, homodimer or homotetramer. Heme b is required as a cofactor. In terms of processing, formation of the three residue Trp-Tyr-Met cross-link is important for the catalase, but not the peroxidase activity of the enzyme.

The catalysed reaction is H2O2 + AH2 = A + 2 H2O. The enzyme catalyses 2 H2O2 = O2 + 2 H2O. In terms of biological role, bifunctional enzyme with both catalase and broad-spectrum peroxidase activity. The sequence is that of Catalase-peroxidase 1 from Cellvibrio japonicus (strain Ueda107) (Pseudomonas fluorescens subsp. cellulosa).